Here is a 124-residue protein sequence, read N- to C-terminus: MATVNQLVRKPRAPKVDKTNVPALNACPQKRGVCTRVYTTTPKKPNSALRKVARVRLTNGFEVTSYIGGEGHNLQEHSVILIRGGRVKDLPGVRYHTVRGALDCAGVTSRRQSRSKYGAKRPKS.

D89 carries the post-translational modification 3-methylthioaspartic acid.

It belongs to the universal ribosomal protein uS12 family. Part of the 30S ribosomal subunit. Contacts proteins S8 and S17. May interact with IF1 in the 30S initiation complex.

With S4 and S5 plays an important role in translational accuracy. In terms of biological role, interacts with and stabilizes bases of the 16S rRNA that are involved in tRNA selection in the A site and with the mRNA backbone. Located at the interface of the 30S and 50S subunits, it traverses the body of the 30S subunit contacting proteins on the other side and probably holding the rRNA structure together. The combined cluster of proteins S8, S12 and S17 appears to hold together the shoulder and platform of the 30S subunit. The chain is Small ribosomal subunit protein uS12 from Shewanella oneidensis (strain ATCC 700550 / JCM 31522 / CIP 106686 / LMG 19005 / NCIMB 14063 / MR-1).